The chain runs to 298 residues: Probable endonuclease 4 (298 aa).

Residues histidine 69, histidine 111, glutamate 146, aspartate 180, histidine 183, histidine 215, aspartate 228, histidine 230, and glutamate 260 each contribute to the Zn(2+) site.

Belongs to the AP endonuclease 2 family. The cofactor is Zn(2+).

The catalysed reaction is Endonucleolytic cleavage to 5'-phosphooligonucleotide end-products.. Endonuclease IV plays a role in DNA repair. It cleaves phosphodiester bonds at apurinic or apyrimidinic (AP) sites, generating a 3'-hydroxyl group and a 5'-terminal sugar phosphate. The protein is Probable endonuclease 4 of Bacillus anthracis (strain A0248).